Reading from the N-terminus, the 322-residue chain is o-succinylbenzoate synthase (322 aa).

Residue K136 is the Proton donor of the active site. 3 residues coordinate Mg(2+): D165, E194, and D219. Residue K243 is the Proton acceptor of the active site.

It belongs to the mandelate racemase/muconate lactonizing enzyme family. MenC type 1 subfamily. As to quaternary structure, monomer. A divalent metal cation is required as a cofactor.

The enzyme catalyses (1R,6R)-6-hydroxy-2-succinyl-cyclohexa-2,4-diene-1-carboxylate = 2-succinylbenzoate + H2O. It functions in the pathway quinol/quinone metabolism; 1,4-dihydroxy-2-naphthoate biosynthesis; 1,4-dihydroxy-2-naphthoate from chorismate: step 4/7. The protein operates within cofactor biosynthesis; phylloquinone biosynthesis. Its function is as follows. Converts 2-succinyl-6-hydroxy-2,4-cyclohexadiene-1-carboxylate (SHCHC) to 2-succinylbenzoate (OSB). Does not show N-succinylamino acid racemase (NSAR) activity with N-succinyl-L-phenylglycine as substrate. The chain is o-succinylbenzoate synthase from Thermosynechococcus vestitus (strain NIES-2133 / IAM M-273 / BP-1).